The following is a 146-amino-acid chain: Large ribosomal subunit protein uL15 (146 aa).

The disordered stretch occupies residues 1-39; the sequence is MTLKLHNLRPAPGAKTAKTRVGRGEGSKGKTAGRGTKGT.

It belongs to the universal ribosomal protein uL15 family. As to quaternary structure, part of the 50S ribosomal subunit.

Binds to the 23S rRNA. In Nocardioides sp. (strain ATCC BAA-499 / JS614), this protein is Large ribosomal subunit protein uL15.